A 371-amino-acid polypeptide reads, in one-letter code: Cathepsin L1 (371 aa).

The first 48 residues, M1–A48, serve as a signal peptide directing secretion. A propeptide spans V49–T153 (activation peptide). N-linked (GlcNAc...) asparagine glycosylation occurs at N127. Disulfide bonds link C175/C218, C209/C251, and C310/C360. C178 is an active-site residue. H317 is an active-site residue. The propeptide occupies D327–S329. Residue N338 is part of the active site.

The protein belongs to the peptidase C1 family. Dimer of a heavy and a light chain linked by disulfide bonds. In terms of tissue distribution, in the embryo, predominantly expressed in the midgut. Also expressed in larval alimentary organs such as salivary gland and midgut including gastric caeca.

It is found in the lysosome. The enzyme catalyses Specificity close to that of papain. As compared to cathepsin B, cathepsin L exhibits higher activity toward protein substrates, but has little activity on Z-Arg-Arg-NHMec, and no peptidyl-dipeptidase activity.. Important for the overall degradation of proteins in lysosomes. Essential for adult male and female fertility. May play a role in digestion. In Drosophila melanogaster (Fruit fly), this protein is Cathepsin L1.